Consider the following 113-residue polypeptide: Large ribosomal subunit protein uL22 (113 aa).

Belongs to the universal ribosomal protein uL22 family. As to quaternary structure, part of the 50S ribosomal subunit.

In terms of biological role, this protein binds specifically to 23S rRNA; its binding is stimulated by other ribosomal proteins, e.g. L4, L17, and L20. It is important during the early stages of 50S assembly. It makes multiple contacts with different domains of the 23S rRNA in the assembled 50S subunit and ribosome. Functionally, the globular domain of the protein is located near the polypeptide exit tunnel on the outside of the subunit, while an extended beta-hairpin is found that lines the wall of the exit tunnel in the center of the 70S ribosome. This Desulforamulus reducens (strain ATCC BAA-1160 / DSM 100696 / MI-1) (Desulfotomaculum reducens) protein is Large ribosomal subunit protein uL22.